The sequence spans 322 residues: tRNA N6-adenosine threonylcarbamoyltransferase (322 aa).

2 residues coordinate Fe cation: H109 and H113. Substrate is bound by residues 131–135 (LISGG), D164, G177, D181, and N277. Residue D303 coordinates Fe cation.

This sequence belongs to the KAE1 / TsaD family. It depends on Fe(2+) as a cofactor.

Its subcellular location is the cytoplasm. The catalysed reaction is L-threonylcarbamoyladenylate + adenosine(37) in tRNA = N(6)-L-threonylcarbamoyladenosine(37) in tRNA + AMP + H(+). Its function is as follows. Required for the formation of a threonylcarbamoyl group on adenosine at position 37 (t(6)A37) in tRNAs that read codons beginning with adenine. Is involved in the transfer of the threonylcarbamoyl moiety of threonylcarbamoyl-AMP (TC-AMP) to the N6 group of A37, together with TsaE and TsaB. TsaD likely plays a direct catalytic role in this reaction. This Mesomycoplasma hyopneumoniae (strain 232) (Mycoplasma hyopneumoniae) protein is tRNA N6-adenosine threonylcarbamoyltransferase.